Here is a 396-residue protein sequence, read N- to C-terminus: Homoserine O-acetyltransferase (396 aa).

Residues 53–370 enclose the AB hydrolase-1 domain; the sequence is NAILVCHALT…DRGHDAFLLE (318 aa). The Nucleophile role is filled by Ser-158. Residue Arg-228 participates in substrate binding. Catalysis depends on residues Asp-331 and His-364. Asp-365 is a substrate binding site.

This sequence belongs to the AB hydrolase superfamily. MetX family. Homodimer.

Its subcellular location is the cytoplasm. It catalyses the reaction L-homoserine + acetyl-CoA = O-acetyl-L-homoserine + CoA. It functions in the pathway amino-acid biosynthesis; L-methionine biosynthesis via de novo pathway; O-acetyl-L-homoserine from L-homoserine: step 1/1. Its function is as follows. Transfers an acetyl group from acetyl-CoA to L-homoserine, forming acetyl-L-homoserine. This Gluconobacter oxydans (strain 621H) (Gluconobacter suboxydans) protein is Homoserine O-acetyltransferase.